A 370-amino-acid polypeptide reads, in one-letter code: Probable endopolygalacturonase A (370 aa).

Positions 1 to 19 are cleaved as a signal peptide; sequence MPSAKPLFCLATLAGAALA. The propeptide occupies 20-32; that stretch reads APAPSRATDFNKR. A disulfide bond links Cys35 and Cys50. 6 PbH1 repeats span residues 162 to 192, 193 to 214, 215 to 235, 244 to 265, 273 to 295, and 307 to 352; these read SDNL…DISE, STYI…AINS, GENI…SIGS, VKNV…RIKT, VEDI…VIEQ, and SNGV…DITG. Residue Asp207 is the Proton donor of the active site. Cysteines 209 and 225 form a disulfide. His229 is a catalytic residue. A glycan (N-linked (GlcNAc...) asparagine) is linked at Asn246. 2 disulfide bridges follow: Cys335–Cys340 and Cys359–Cys368.

Belongs to the glycosyl hydrolase 28 family.

It localises to the secreted. The enzyme catalyses (1,4-alpha-D-galacturonosyl)n+m + H2O = (1,4-alpha-D-galacturonosyl)n + (1,4-alpha-D-galacturonosyl)m.. Its function is as follows. Involved in maceration and soft-rotting of plant tissue. Hydrolyzes the 1,4-alpha glycosidic bonds of de-esterified pectate in the smooth region of the plant cell wall. This Aspergillus kawachii (strain NBRC 4308) (White koji mold) protein is Probable endopolygalacturonase A (pgaA).